The primary structure comprises 100 residues: Putative sodium channel toxin Ts26 (100 aa).

Positions 1 to 22 are cleaved as a signal peptide; sequence MVKSAMKIVILILFVLLIRVES. One can recognise an LCN-type CS-alpha/beta domain in the interval 24-92; it reads RNGYPDISDG…VMDTTIEYCE (69 aa). Cystine bridges form between C38–C64, C50–C69, C54–C71, and C65–C91.

Belongs to the long (4 C-C) scorpion toxin superfamily. Sodium channel inhibitor family. Expressed by the venom gland.

It is found in the secreted. In terms of biological role, putative sodium channel toxin. In Tityus serrulatus (Brazilian scorpion), this protein is Putative sodium channel toxin Ts26.